A 198-amino-acid polypeptide reads, in one-letter code: dTTP/UTP pyrophosphatase (198 aa).

Catalysis depends on aspartate 75, which acts as the Proton acceptor.

Belongs to the Maf family. YhdE subfamily. Requires a divalent metal cation as cofactor.

It localises to the cytoplasm. It catalyses the reaction dTTP + H2O = dTMP + diphosphate + H(+). The enzyme catalyses UTP + H2O = UMP + diphosphate + H(+). Nucleoside triphosphate pyrophosphatase that hydrolyzes dTTP and UTP. May have a dual role in cell division arrest and in preventing the incorporation of modified nucleotides into cellular nucleic acids. The chain is dTTP/UTP pyrophosphatase from Wolbachia sp. subsp. Brugia malayi (strain TRS).